Consider the following 371-residue polypeptide: Peptidyl-prolyl cis-trans isomerase D (371 aa).

The PPIase cyclophilin-type domain maps to 8 to 172; the sequence is FFDIAIGGQL…EPVVIADCGQ (165 aa). The segment at 175-202 is disordered; sequence SDDPFLAERTSTDGDPYEDYPDDEDQEL. The segment covering 189 to 201 has biased composition (acidic residues); that stretch reads DPYEDYPDDEDQE. 3 TPR repeats span residues 212–245, 265–303, and 308–341; these read AKTIREVANRLYKQGDISGALQKYSKSIRYLDVH, APLLLNSALAAIRIEPHSAANAMNAVANTSRALNRLELS, and AKAYYRRGLAKTIMRDEVGAEQDLKTANELLPED.

This sequence belongs to the cyclophilin-type PPIase family. PPIase D subfamily.

The protein localises to the cytoplasm. It catalyses the reaction [protein]-peptidylproline (omega=180) = [protein]-peptidylproline (omega=0). PPIases accelerate the folding of proteins. It catalyzes the cis-trans isomerization of proline imidic peptide bonds in oligopeptides. The sequence is that of Peptidyl-prolyl cis-trans isomerase D (Cyp40) from Amanita muscaria (Fly agaric).